We begin with the raw amino-acid sequence, 262 residues long: Pyridoxine 5'-phosphate synthase (262 aa).

Asn-6 contributes to the 3-amino-2-oxopropyl phosphate binding site. A 1-deoxy-D-xylulose 5-phosphate-binding site is contributed by 8 to 9 (DH). A 3-amino-2-oxopropyl phosphate-binding site is contributed by Arg-17. His-43 acts as the Proton acceptor in catalysis. Positions 45 and 50 each coordinate 1-deoxy-D-xylulose 5-phosphate. Glu-70 functions as the Proton acceptor in the catalytic mechanism. Thr-102 lines the 1-deoxy-D-xylulose 5-phosphate pocket. His-215 acts as the Proton donor in catalysis. Residues Gly-216 and 237–238 (GH) each bind 3-amino-2-oxopropyl phosphate.

It belongs to the PNP synthase family. Homooctamer; tetramer of dimers.

It is found in the cytoplasm. The catalysed reaction is 3-amino-2-oxopropyl phosphate + 1-deoxy-D-xylulose 5-phosphate = pyridoxine 5'-phosphate + phosphate + 2 H2O + H(+). It functions in the pathway cofactor biosynthesis; pyridoxine 5'-phosphate biosynthesis; pyridoxine 5'-phosphate from D-erythrose 4-phosphate: step 5/5. Its function is as follows. Catalyzes the complicated ring closure reaction between the two acyclic compounds 1-deoxy-D-xylulose-5-phosphate (DXP) and 3-amino-2-oxopropyl phosphate (1-amino-acetone-3-phosphate or AAP) to form pyridoxine 5'-phosphate (PNP) and inorganic phosphate. This is Pyridoxine 5'-phosphate synthase from Helicobacter acinonychis (strain Sheeba).